The sequence spans 435 residues: Pregnancy-specific beta-1-glycoprotein 6 (435 aa).

The first 34 residues, 1 to 34 (MGPLSAPPCTQHITWKGLLLTASLLNFWNLPTTA), serve as a signal peptide directing secretion. The Ig-like V-type domain occupies 35–143 (QVIIEAKPPK…TGYFTVTLYS (109 aa)). Residues Asn-61, Asn-103, and Asn-110 are each glycosylated (N-linked (GlcNAc...) asparagine). Positions 126–128 (RGD) match the Cell attachment site motif. Ig-like C2-type domains lie at 148-233 (PSIS…VTLN), 241-326 (PYIT…VTLN), and 334-405 (PRIY…KEIS). 3 disulfide bridges follow: Cys-168-Cys-216, Cys-261-Cys-309, and Cys-353-Cys-393. N-linked (GlcNAc...) asparagine glycans are attached at residues Asn-198, Asn-267, Asn-302, and Asn-386.

This sequence belongs to the immunoglobulin superfamily. CEA family.

It is found in the secreted. This is Pregnancy-specific beta-1-glycoprotein 6 (PSG6) from Homo sapiens (Human).